The chain runs to 448 residues: Fibulin-5 (448 aa).

The N-terminal stretch at 1-23 is a signal peptide; sequence MPGLKRILTVTILALWLPHPGNA. The EGF-like 1; calcium-binding domain occupies 42–82; the sequence is DIDECRTIPEACRGDMMCVNQNGGYLCIPRTNPVYRGPYSN. Cystine bridges form between cysteine 46–cysteine 59, cysteine 53–cysteine 68, cysteine 131–cysteine 144, cysteine 138–cysteine 153, cysteine 155–cysteine 166, cysteine 172–cysteine 181, cysteine 177–cysteine 190, cysteine 192–cysteine 205, cysteine 211–cysteine 221, cysteine 217–cysteine 230, cysteine 232–cysteine 245, cysteine 251–cysteine 262, cysteine 258–cysteine 271, cysteine 273–cysteine 286, cysteine 292–cysteine 305, cysteine 299–cysteine 314, and cysteine 320–cysteine 332. Positions 54 to 56 match the Cell attachment site motif; the sequence is RGD. Residues 127-167 form the EGF-like 2; calcium-binding domain; that stretch reads DVDECATDSHQCNPTQICINTEGGYTCSCTDGYWLLEGQCL. The region spanning 168–206 is the EGF-like 3; calcium-binding domain; the sequence is DIDECRYGYCQQLCANVPGSYSCTCNPGFTLNDDGRSCQ. Residues 207 to 246 enclose the EGF-like 4; calcium-binding domain; that stretch reads DVNECETENPCVQTCVNTYGSFICRCDPGYELEEDGIHCS. Positions 245-448 are interaction with LOXL1; it reads CSDMDECSFS…LRIYVSQYPF (204 aa). The EGF-like 5; calcium-binding domain maps to 247-287; the sequence is DMDECSFSEFLCQHECVNQPGSYFCSCPPGYVLLDDNRSCQ. N-linked (GlcNAc...) asparagine glycans are attached at residues asparagine 283 and asparagine 296. One can recognise an EGF-like 6; calcium-binding domain in the interval 288–333; the sequence is DINECEHRNHTCTSLQTCYNLQGGFKCIDPISCEEPYLLIGENRCM.

The protein belongs to the fibulin family. In terms of assembly, homodimer. Monomer, homodimerizes in presence of Ca(2+). Interacts with ELN. Interacts (via N-terminus) with the integrins ITGAV/ITGB3, ITGAV/ITGB5 and ITGA9/ITGB1. Interacts with FBN1 (via N-terminal domain). Forms a ternary complex with ELN and FBN1. Interacts with EFEMP2 with moderate affinity. Interacts with LOXL1. Post-translationally, N-glycosylated.

Its subcellular location is the secreted. It localises to the extracellular space. It is found in the extracellular matrix. Essential for elastic fiber formation, is involved in the assembly of continuous elastin (ELN) polymer and promotes the interaction of microfibrils and ELN. Stabilizes and organizes elastic fibers in the skin, lung and vasculature. Promotes adhesion of endothelial cells through interaction of integrins and the RGD motif. Vascular ligand for integrin receptors which may play a role in vascular development and remodeling. May act as an adapter that mediates the interaction between FBN1 and ELN. The protein is Fibulin-5 (Fbln5) of Mus musculus (Mouse).